The chain runs to 458 residues: BPI fold-containing family B member 2 (458 aa).

An N-terminal signal peptide occupies residues 1-20 (MAWASRLGLLLALLLPVVGA). Phosphothreonine; by FAM20C is present on Thr-52. Ser-60 bears the Phosphoserine; by FAM20C mark. Residues Asn-96, Asn-151, Asn-293, and Asn-332 are each glycosylated (N-linked (GlcNAc...) asparagine). Cys-137 and Cys-174 form a disulfide bridge.

This sequence belongs to the BPI/LBP/Plunc superfamily. BPI/LBP family. As to expression, highly expressed in tonsils, especially in hypertrophic tonsils. Detected at very low levels in fetal liver.

Its subcellular location is the secreted. This is BPI fold-containing family B member 2 (BPIFB2) from Homo sapiens (Human).